The chain runs to 76 residues: Beta-defensin 121 (76 aa).

Residues 1–15 (MKLLLLLLTVTLLLA) form the signal peptide. Disulfide bonds link C23–C50, C30–C44, and C34–C51.

The protein belongs to the beta-defensin family. As to expression, abundant expression in the male reproductive tract only.

The protein resides in the secreted. Has antibacterial activity. The chain is Beta-defensin 121 (DEFB121) from Homo sapiens (Human).